A 313-amino-acid chain; its full sequence is Aspartate carbamoyltransferase catalytic subunit (313 aa).

Positions 51 and 52 each coordinate carbamoyl phosphate. Residue lysine 80 participates in L-aspartate binding. Arginine 101, histidine 129, and glutamine 132 together coordinate carbamoyl phosphate. Positions 162 and 224 each coordinate L-aspartate. 2 residues coordinate carbamoyl phosphate: leucine 263 and proline 264.

It belongs to the aspartate/ornithine carbamoyltransferase superfamily. ATCase family. As to quaternary structure, heterododecamer (2C3:3R2) of six catalytic PyrB chains organized as two trimers (C3), and six regulatory PyrI chains organized as three dimers (R2).

It carries out the reaction carbamoyl phosphate + L-aspartate = N-carbamoyl-L-aspartate + phosphate + H(+). It functions in the pathway pyrimidine metabolism; UMP biosynthesis via de novo pathway; (S)-dihydroorotate from bicarbonate: step 2/3. Catalyzes the condensation of carbamoyl phosphate and aspartate to form carbamoyl aspartate and inorganic phosphate, the committed step in the de novo pyrimidine nucleotide biosynthesis pathway. This chain is Aspartate carbamoyltransferase catalytic subunit, found in Phocaeicola vulgatus (strain ATCC 8482 / DSM 1447 / JCM 5826 / CCUG 4940 / NBRC 14291 / NCTC 11154) (Bacteroides vulgatus).